The chain runs to 442 residues: uncharacterized protein (442 aa).

[4Fe-4S] cluster-binding residues include Cys-43, Cys-49, Cys-52, and Cys-130. S-adenosyl-L-methionine-binding residues include Gln-273, Tyr-302, Glu-323, and Asp-372. Catalysis depends on Cys-399, which acts as the Nucleophile.

It belongs to the class I-like SAM-binding methyltransferase superfamily. RNA M5U methyltransferase family.

This is an uncharacterized protein from Protochlamydia amoebophila (strain UWE25).